A 159-amino-acid polypeptide reads, in one-letter code: Protein-export protein SecB (159 aa).

The protein belongs to the SecB family. Homotetramer, a dimer of dimers. One homotetramer interacts with 1 SecA dimer.

It localises to the cytoplasm. One of the proteins required for the normal export of preproteins out of the cell cytoplasm. It is a molecular chaperone that binds to a subset of precursor proteins, maintaining them in a translocation-competent state. It also specifically binds to its receptor SecA. The protein is Protein-export protein SecB of Hahella chejuensis (strain KCTC 2396).